The chain runs to 65 residues: MAKSNKANDLIKVTLVRSTIGRIKAHRASVAGLGLRRLNQTVEVQDTPANRGMINAVSYLLKVEA.

It belongs to the universal ribosomal protein uL30 family. In terms of assembly, part of the 50S ribosomal subunit.

In Methylobacillus flagellatus (strain ATCC 51484 / DSM 6875 / VKM B-1610 / KT), this protein is Large ribosomal subunit protein uL30.